Reading from the N-terminus, the 125-residue chain is Ribonuclease P protein component (125 aa).

Belongs to the RnpA family. As to quaternary structure, consists of a catalytic RNA component (M1 or rnpB) and a protein subunit.

The enzyme catalyses Endonucleolytic cleavage of RNA, removing 5'-extranucleotides from tRNA precursor.. Functionally, RNaseP catalyzes the removal of the 5'-leader sequence from pre-tRNA to produce the mature 5'-terminus. It can also cleave other RNA substrates such as 4.5S RNA. The protein component plays an auxiliary but essential role in vivo by binding to the 5'-leader sequence and broadening the substrate specificity of the ribozyme. This chain is Ribonuclease P protein component, found in Clostridium botulinum (strain Eklund 17B / Type B).